The primary structure comprises 312 residues: Nicotinamide adenine dinucleotide transporter 1, chloroplastic (312 aa).

Solcar repeat units lie at residues 11-103 (KNVL…LKSF), 111-199 (LSVG…IKVY), and 211-299 (LNAR…VHRF). Transmembrane regions (helical) follow at residues 17-37 (AAAG…LDVI), 78-98 (GLSP…TMYD), 117-137 (VLAA…LWVV), 171-191 (GLYS…IQFP), 216-232 (VAVA…TLTY), and 271-293 (FYRG…FTSF).

It belongs to the mitochondrial carrier (TC 2.A.29) family. In terms of tissue distribution, highly expressed in young leaf mesophyll cells, root tips and at the branches of adventitious roots. Low expression in all flower tissues and not detected in siliques and seeds.

The protein resides in the plastid. The protein localises to the chloroplast membrane. Inhibited by pyridoxal 5'-phosphate, bathophenanthroline, tannic acid, mersalyl, mercuric chloride, p-hydroxymercuribenzoate, p-hydroxymercuribenzoate sulfonate, bromocresol purple and N-ethylmaleimide. In terms of biological role, mediates the NAD(+) import into chloroplast. Favors the NAD(+)(in)/ADP or AMP(out) antiport exchange, but is also able to catalyze a low unidirectional transport (uniport) of NAD(+). Transports NAD(+), nicotinic acid adenine dinucleotide, nicotinamide mononucleotide, nicotinic acid mononucleotide, FAD, FMN, TTP, TDP, TMP, UTP, UDP, UMP, CTP, CDP, CMP, GTP, GDP, GMP, 3'-AMP, ATP, ADP, and AMP, has low transport activity with cAMP, pyrophosphate, NADH and alpha-NAD(+), and has no activity with NADP(+), NADPH, nicotinamide, nicotinic acid, adenosine, thiamine mono- or diphosphate, inorganic phosphate, CoA, folate, NaCl, malate, malonate, citrate, fumarate, aspartate, glutamate, S-adenosylmethionine, lysine, arginine, and ornithine. This Arabidopsis thaliana (Mouse-ear cress) protein is Nicotinamide adenine dinucleotide transporter 1, chloroplastic (NDT1).